A 96-amino-acid chain; its full sequence is MRPYEIMVILDPTLDERTVAPSLETFLNVVRKDGGKVEKVDIWGKRRLAYEIAKHAEGIYVVIDVKAAPATVSELDRQLSLNESVLRTKVMRTDKH.

Belongs to the bacterial ribosomal protein bS6 family.

Functionally, binds together with bS18 to 16S ribosomal RNA. This is Small ribosomal subunit protein bS6 (rpsF) from Mycobacterium bovis (strain ATCC BAA-935 / AF2122/97).